Reading from the N-terminus, the 140-residue chain is Chorion class A protein Ld2/Ld41 (140 aa).

Residues 1-21 form the signal peptide; that stretch reads MNSFAFLLVCIQACLVQSVFS.

Belongs to the chorion protein family.

In terms of biological role, this protein is one of many from the eggshell of the gypsy moth. This chain is Chorion class A protein Ld2/Ld41, found in Lymantria dispar (Gypsy moth).